Here is a 223-residue protein sequence, read N- to C-terminus: Thiamine-phosphate synthase (223 aa).

Residues Q47–K51 and N84 contribute to the 4-amino-2-methyl-5-(diphosphooxymethyl)pyrimidine site. 2 residues coordinate Mg(2+): D85 and D104. Residue S123 coordinates 4-amino-2-methyl-5-(diphosphooxymethyl)pyrimidine. A 2-[(2R,5Z)-2-carboxy-4-methylthiazol-5(2H)-ylidene]ethyl phosphate-binding site is contributed by T150–T152. K153 contacts 4-amino-2-methyl-5-(diphosphooxymethyl)pyrimidine. G182 is a binding site for 2-[(2R,5Z)-2-carboxy-4-methylthiazol-5(2H)-ylidene]ethyl phosphate.

Belongs to the thiamine-phosphate synthase family. Mg(2+) is required as a cofactor.

The catalysed reaction is 2-[(2R,5Z)-2-carboxy-4-methylthiazol-5(2H)-ylidene]ethyl phosphate + 4-amino-2-methyl-5-(diphosphooxymethyl)pyrimidine + 2 H(+) = thiamine phosphate + CO2 + diphosphate. It catalyses the reaction 2-(2-carboxy-4-methylthiazol-5-yl)ethyl phosphate + 4-amino-2-methyl-5-(diphosphooxymethyl)pyrimidine + 2 H(+) = thiamine phosphate + CO2 + diphosphate. It carries out the reaction 4-methyl-5-(2-phosphooxyethyl)-thiazole + 4-amino-2-methyl-5-(diphosphooxymethyl)pyrimidine + H(+) = thiamine phosphate + diphosphate. The protein operates within cofactor biosynthesis; thiamine diphosphate biosynthesis; thiamine phosphate from 4-amino-2-methyl-5-diphosphomethylpyrimidine and 4-methyl-5-(2-phosphoethyl)-thiazole: step 1/1. Functionally, condenses 4-methyl-5-(beta-hydroxyethyl)thiazole monophosphate (THZ-P) and 2-methyl-4-amino-5-hydroxymethyl pyrimidine pyrophosphate (HMP-PP) to form thiamine monophosphate (TMP). The chain is Thiamine-phosphate synthase from Saccharopolyspora erythraea (strain ATCC 11635 / DSM 40517 / JCM 4748 / NBRC 13426 / NCIMB 8594 / NRRL 2338).